An 805-amino-acid chain; its full sequence is MQFPESWLRSLVNPSIGTDELAHRLTMAGLEVEETEPAAPPFTGVVVARIVDIAPHPDADKLRVCQVDDGSGALLQIVCGAPNAAAGLTVPLARVGAELPGGMKIGVAKMRGVQSSGMLCSARELGLSQDHAGLLELPAALRPGTDIRAALDLDDTLFTLKLTPNRADCLSIFGVAREVAALTGTPLTAPAAEPVPVTIDHRLPVAIQAPDLCGRFAGRVIQGVNARAATPEWMKTRLERAGQRSVSALVDISNYVMLEVGRPSHVFDLDKIGGDLSVRWAREGETLELLNGQAVALDPKVGVVVAGEQVESLAGIMGGEATSVTLDTRNIYLEAAFWWPGAIAGRARRYKFSSEASHRFERGVDYASIPEHIELITRLILDICGGQAGPVDDQCVNLPVREPVRMRLARCHRVLGVAVERAEVAQIFTRLGLPFQEQGDDFVVTPPSYRFDIEIEEDLIEEVARVYGFERIPDVPPVARAKMHAQPEARRGAHAVRRLVAARDYQEVVNYSFVEAAWERDYAGNDNLVRLVNPIASHLSVMRSSLIAGLVAIVRHNANRKQSRVRLFELGRVFHRDPQLADGPLEVAGVRQPLMLAGVAWGGAVEEQWGVPHRQVDFYDVKQDVEALFGARADALRFVADRYPALHPGRSARIELDGQPIGWLGELHPQWTQQADLHHAPVVFELDFEALAERRLPAVRELSRQPAVVRDLALWVDAKLPAQAMLDTVAAAIARDPQLSVVQDAQVFDVWREKPVAGQTVTEKSLAFRFWLQDTEVTLDEARVADCIARIKDALVAAHNARQRA.

The region spanning 39–148 (APPFTGVVVA…AALRPGTDIR (110 aa)) is the tRNA-binding domain. The B5 domain occupies 399-474 (PVREPVRMRL…RVYGFERIPD (76 aa)). Residues Asp452, Asp458, Glu461, and Glu462 each coordinate Mg(2+). In terms of domain architecture, FDX-ACB spans 703-804 (SRQPAVVRDL…LVAAHNARQR (102 aa)).

This sequence belongs to the phenylalanyl-tRNA synthetase beta subunit family. Type 1 subfamily. As to quaternary structure, tetramer of two alpha and two beta subunits. Requires Mg(2+) as cofactor.

The protein resides in the cytoplasm. The catalysed reaction is tRNA(Phe) + L-phenylalanine + ATP = L-phenylalanyl-tRNA(Phe) + AMP + diphosphate + H(+). The protein is Phenylalanine--tRNA ligase beta subunit of Bordetella parapertussis (strain 12822 / ATCC BAA-587 / NCTC 13253).